The following is an 850-amino-acid chain: Pentatricopeptide repeat-containing protein At3g49170, chloroplastic (850 aa).

A chloroplast-targeting transit peptide spans Met1 to Asp50. PPR repeat units lie at residues Asp61–Pro95, Asp96–Asp130, Val131–Pro164, Asn165–Glu199, Asp201–Leu232, Asn233–Ser267, Asp268–Asp302, Asp303–His334, Ser335–Glu370, Asn372–Ser406, Asn407–Lys437, Asn438–Val472, Ser473–Cys507, Asn508–Arg538, Asn539–Pro573, Asn574–Pro609, and Lys610–Gln640. Residues Val645–Gly720 form a type E motif region. The tract at residues Asp721–Lys751 is type E(+) motif. Residues Arg752–Trp850 are type DYW motif.

The protein belongs to the PPR family. PCMP-H subfamily.

It is found in the plastid. Its subcellular location is the chloroplast. Functionally, may play a role in embryogenesis. This Arabidopsis thaliana (Mouse-ear cress) protein is Pentatricopeptide repeat-containing protein At3g49170, chloroplastic (EMB2261).